The primary structure comprises 972 residues: Peptidyl-glycine alpha-amidating monooxygenase (972 aa).

A signal peptide spans 1-20 (MAGFRSLLVLLLVFPSGCVG). The interval 1–494 (MAGFRSLLVL…EGTWEPEHTG (494 aa)) is peptidylglycine alpha-hydroxylating monooxygenase. Positions 21–30 (FRSPLSVFKR) are excised as a propeptide. The Intragranular segment spans residues 31–873 (FKETTRSFSN…VPAVLITTLL (843 aa)). 5 disulfide bridges follow: C42/C181, C76/C121, C109/C126, C222/C329, and C288/C310. Positions 102 and 103 each coordinate Cu(2+). Cu(2+)-binding residues include H167, H237, H239, and M309. The segment at 495-817 (DFHVEEALDW…STEKMEHRSV (323 aa)) is peptidyl-alpha-hydroxyglycine alpha-amidating lyase. NHL repeat units lie at residues 498-541 (VEEA…NSFD), 567-608 (AAVL…LDPK), 617-662 (LGRS…FSPS), and 670-714 (GEAS…FKTD). A Ca(2+)-binding site is contributed by V517. R530 serves as a coordination point for a protein. H582 contributes to the Zn(2+) binding site. L584 serves as a coordination point for Ca(2+). C631 and C652 form a disulfide bridge. Y651 contributes to the a protein binding site. Residue H687 participates in Zn(2+) binding. Residues C699 and C710 are joined by a disulfide bond. R703 contributes to the a protein binding site. N-linked (GlcNAc...) asparagine glycosylation occurs at N762. The stretch at 766-809 (GEIIDVFKPVRKHFDMPHDIAASEDGTVYVGDAHTNTVWKFTST) is one NHL 5 repeat. H783 serves as a coordination point for Zn(2+). Residue D784 coordinates Ca(2+). The chain crosses the membrane as a helical span at residues 874-897 (VIPVVVLLAIALFIRWKKSRAFGD). The Cytoplasmic portion of the chain corresponds to 898 to 972 (SERKLEASSG…APPPAPAPSS (75 aa)). The interval 925–942 (NFFASRKGYSRKGFDRLS) is interaction with RASSF9. S929 and S942 each carry phosphoserine. Residues 937–972 (GFDRLSTEGSDQEKDEDASESEEEYSAPPPAPAPSS) are disordered. T943 bears the Phosphothreonine mark. S946 carries the phosphoserine; by UHMK1 modification. A compositionally biased stretch (acidic residues) spans 949-961 (EKDEDASESEEEY). The residue at position 957 (S957) is a Phosphoserine. The span at 963–972 (APPPAPAPSS) shows a compositional bias: pro residues.

It in the C-terminal section; belongs to the peptidyl-alpha-hydroxyglycine alpha-amidating lyase family. In the N-terminal section; belongs to the copper type II ascorbate-dependent monooxygenase family. Monomer. Interacts with RASSF9. Zn(2+) is required as a cofactor. Requires Cu(2+) as cofactor.

The protein localises to the cytoplasmic vesicle. It localises to the secretory vesicle membrane. It carries out the reaction a [peptide]-C-terminal glycine + 2 L-ascorbate + O2 = a [peptide]-C-terminal (2S)-2-hydroxyglycine + 2 monodehydro-L-ascorbate radical + H2O. The catalysed reaction is a [peptide]-C-terminal (2S)-2-hydroxyglycine = a [peptide]-C-terminal amide + glyoxylate. It catalyses the reaction N-dodecanoylglycine + 2 L-ascorbate + O2 = N-dodecanoyl-(2S)-hydroxyglycine + 2 monodehydro-L-ascorbate radical + H2O. The enzyme catalyses N-dodecanoyl-(2S)-hydroxyglycine = dodecanamide + glyoxylate. It carries out the reaction N-(9Z,12Z,15Z)-octadecatrienoylglycine + 2 L-ascorbate + O2 = N-(9Z,12Z,15Z)-octadecatrienoyl-(2S)-hydroxyglycine + 2 monodehydro-L-ascorbate radical + H2O. The catalysed reaction is N-(9Z,12Z,15Z)-octadecatrienoyl-(2S)-hydroxyglycine = (9Z,12Z,15Z)-octadecatrienamide + glyoxylate. It catalyses the reaction N-(9Z-octadecenoyl)glycine + 2 L-ascorbate + O2 = N-(9Z-octadecenoyl)-(2S)-hydroxyglycine + 2 monodehydro-L-ascorbate radical + H2O. The enzyme catalyses N-(9Z-octadecenoyl)-(2S)-hydroxyglycine = (9Z)-octadecenamide + glyoxylate. It carries out the reaction N-tetradecanoylglycine + 2 L-ascorbate + O2 = N-tetradecanoyl-(2S)-hydroxyglycine + 2 monodehydro-L-ascorbate radical + H2O. The catalysed reaction is N-tetradecanoyl-(2S)-hydroxyglycine = tetradecamide + glyoxylate. It catalyses the reaction N-decanoylglycine + 2 L-ascorbate + O2 = N-decanoyl-(2S)-hydroxyglycine + 2 monodehydro-L-ascorbate radical + H2O. The enzyme catalyses N-decanoyl-(2S)-hydroxyglycine = decanamide + glyoxylate. It carries out the reaction N-octanoylglycine + 2 L-ascorbate + O2 = N-octanoyl-(2S)-hydroxyglycine + 2 monodehydro-L-ascorbate radical + H2O. The catalysed reaction is N-octanoyl-(2S)-hydroxyglycine = octanamide + glyoxylate. PAM activity is inhibited by EDTA, phenylglyoxal and diethyl pyrocarbonate. PAL activity is stimulated by cadmium and inhibited by mercury. Functionally, bifunctional enzyme that catalyzes amidation of the C-terminus of proteins. Alpha-amidation is present at the C-terminus of many endocrine hormones and neuropeptides and is required for their activity. C-terminal amidation also takes place in response to protein fragmentation triggered by oxidative stress, promoting degradation of amidated protein fragments by the proteasome. Alpha-amidation involves two sequential reactions, both of which are catalyzed by separate catalytic domains of the enzyme. The first step, catalyzed by peptidyl alpha-hydroxylating monooxygenase (PHM) domain, is the copper-, ascorbate-, and O2- dependent stereospecific hydroxylation (with S stereochemistry) at the alpha-carbon (C-alpha) of the C-terminal glycine of the peptidylglycine substrate. The second step, catalyzed by the peptidylglycine amidoglycolate lyase (PAL) domain, is the zinc-dependent cleavage of the N-C-alpha bond, producing the alpha-amidated peptide and glyoxylate. Similarly, catalyzes the two-step conversion of an N-fatty acylglycine to a primary fatty acid amide and glyoxylate. The sequence is that of Peptidyl-glycine alpha-amidating monooxygenase (PAM) from Bos taurus (Bovine).